Reading from the N-terminus, the 426-residue chain is Cytochrome c biogenesis protein Ccs1 (426 aa).

A run of 3 helical transmembrane segments spans residues 11–31 (LKFAIALLLLISITITFGSII), 70–90 (NFWFISLLLSLGISLIACTFF), and 153–173 (IAPVFVHLSIILILLGSIFAS).

It belongs to the Ccs1/CcsB family. As to quaternary structure, may interact with CcsA.

It is found in the plastid. It localises to the chloroplast thylakoid membrane. Functionally, required during biogenesis of c-type cytochromes (cytochrome c6 and cytochrome f) at the step of heme attachment. The sequence is that of Cytochrome c biogenesis protein Ccs1 from Heterosigma akashiwo (strain CCMP452 / OLISTH).